A 225-amino-acid polypeptide reads, in one-letter code: UPF0758 protein Spea_3837 (225 aa).

An MPN domain is found at 102 to 224 (ILSDPDLTRD…IVSFAERGWI (123 aa)). 3 residues coordinate Zn(2+): histidine 173, histidine 175, and aspartate 186. Residues 173–186 (HNHPSGIAEPSTAD) carry the JAMM motif motif.

The protein belongs to the UPF0758 family.

The polypeptide is UPF0758 protein Spea_3837 (Shewanella pealeana (strain ATCC 700345 / ANG-SQ1)).